Here is a 129-residue protein sequence, read N- to C-terminus: Small ribosomal subunit protein uS11 (129 aa).

The protein belongs to the universal ribosomal protein uS11 family. Part of the 30S ribosomal subunit. Interacts with proteins S7 and S18. Binds to IF-3.

In terms of biological role, located on the platform of the 30S subunit, it bridges several disparate RNA helices of the 16S rRNA. Forms part of the Shine-Dalgarno cleft in the 70S ribosome. The sequence is that of Small ribosomal subunit protein uS11 from Escherichia fergusonii (strain ATCC 35469 / DSM 13698 / CCUG 18766 / IAM 14443 / JCM 21226 / LMG 7866 / NBRC 102419 / NCTC 12128 / CDC 0568-73).